We begin with the raw amino-acid sequence, 170 residues long: Ribosome maturation factor RimM (170 aa).

A PRC barrel domain is found at 98–170; it reads PDEYYWVDLE…RIVVDWDPEF (73 aa).

It belongs to the RimM family. As to quaternary structure, binds ribosomal protein uS19.

It localises to the cytoplasm. Functionally, an accessory protein needed during the final step in the assembly of 30S ribosomal subunit, possibly for assembly of the head region. Essential for efficient processing of 16S rRNA. May be needed both before and after RbfA during the maturation of 16S rRNA. It has affinity for free ribosomal 30S subunits but not for 70S ribosomes. The chain is Ribosome maturation factor RimM from Xylella fastidiosa (strain 9a5c).